The following is a 556-amino-acid chain: Adenine deaminase (556 aa).

Belongs to the metallo-dependent hydrolases superfamily. Adenine deaminase family. Mn(2+) serves as cofactor.

It catalyses the reaction adenine + H2O + H(+) = hypoxanthine + NH4(+). The protein is Adenine deaminase of Methanocaldococcus jannaschii (strain ATCC 43067 / DSM 2661 / JAL-1 / JCM 10045 / NBRC 100440) (Methanococcus jannaschii).